A 261-amino-acid polypeptide reads, in one-letter code: Putative cytochrome YdhU (261 aa).

The chain crosses the membrane as a helical span at residues 25–45; the sequence is FWPVWLIIAGVLLVGMWLVLG. A heme b-binding site is contributed by His-77. 3 helical membrane-spanning segments follow: residues 81–101, 108–128, and 182–202; these read ALLF…MVGA, VAVH…FVLI, and VAYV…GLLC. A heme b-binding site is contributed by His-111. His-223 and His-237 together coordinate heme b. A helical transmembrane segment spans residues 224-244; sequence FALAFISLFFIFGHLYLCTTG. His-237 contacts a menaquinone.

The protein belongs to the PhsC family. It depends on heme as a cofactor.

It localises to the cell inner membrane. This is Putative cytochrome YdhU (ydhU) from Escherichia coli (strain K12).